Reading from the N-terminus, the 147-residue chain is Small ribosomal subunit protein uS12 (147 aa).

Belongs to the universal ribosomal protein uS12 family. As to quaternary structure, part of the 30S ribosomal subunit.

In terms of biological role, with S4 and S5 plays an important role in translational accuracy. Located at the interface of the 30S and 50S subunits. The sequence is that of Small ribosomal subunit protein uS12 from Methanococcus vannielii (strain ATCC 35089 / DSM 1224 / JCM 13029 / OCM 148 / SB).